We begin with the raw amino-acid sequence, 224 residues long: Haloacetate dehalogenase H-2 (224 aa).

Catalysis depends on D10, which acts as the Nucleophile.

Belongs to the HAD-like hydrolase superfamily. S-2-haloalkanoic acid dehalogenase family.

The catalysed reaction is a haloacetate + H2O = a halide anion + glycolate + H(+). In Moraxella sp. (strain B), this protein is Haloacetate dehalogenase H-2 (dehH2).